Here is a 573-residue protein sequence, read N- to C-terminus: NADH-ubiquinone oxidoreductase chain 5 (573 aa).

Transmembrane regions (helical) follow at residues 4–24 (ISFI…LYYL), 44–64 (IVMT…VLMI), 85–105 (FIML…SPNL), 106–126 (VSIL…VIYF), 147–167 (VALL…YIFY), 170–190 (VMQN…AAMT), 212–234 (SALV…FNIV), 239–259 (WLGQ…GLGA), 268–288 (IIAL…SMGF), 294–314 (FHLL…GAII), 337–357 (SACF…AGFY), 377–396 (FLYF…LVYY), 422–442 (LGLL…IFPF), 452–472 (LKML…LISI), 487–507 (LTLF…GMIF), and 552–572 (LKIY…FLLF).

It belongs to the complex I subunit 5 family.

It localises to the mitochondrion inner membrane. It catalyses the reaction a ubiquinone + NADH + 5 H(+)(in) = a ubiquinol + NAD(+) + 4 H(+)(out). In terms of biological role, core subunit of the mitochondrial membrane respiratory chain NADH dehydrogenase (Complex I) that is believed to belong to the minimal assembly required for catalysis. Complex I functions in the transfer of electrons from NADH to the respiratory chain. The immediate electron acceptor for the enzyme is believed to be ubiquinone. In Drosophila yakuba (Fruit fly), this protein is NADH-ubiquinone oxidoreductase chain 5 (mt:ND5).